A 258-amino-acid chain; its full sequence is Cholera enterotoxin subunit A (258 aa).

Residues 1–18 (MVKIIFVFFIFLSSFSYA) form the signal peptide. Residues 25 to 28 (RADS) and 41 to 43 (MPR) contribute to the NAD(+) site. Glutamate 130 is an active-site residue. Cysteine 205 and cysteine 217 are joined by a disulfide.

It belongs to the enterotoxin A family. As to quaternary structure, the holotoxin (choleragen) consists of a pentameric ring of B subunits whose central pore is occupied by the A subunit. The A subunit contains two chains, A1 and A2, linked by a disulfide bridge. Interaction with the host protein ARF6 causes a conformation change so that the enterotoxin subunit A1 can bind NAD and catalyze the ADP-ribosylation of the host Gs alpha.

Functionally, the A1 chain catalyzes the ADP-ribosylation of Gs alpha, a GTP-binding regulatory protein, to activate the adenylate cyclase. This leads to an overproduction of cAMP and eventually to a hypersecretion of chloride and bicarbonate followed by water, resulting in the characteristic cholera stool. The A2 chain tethers A1 to the pentameric ring. The sequence is that of Cholera enterotoxin subunit A (ctxA) from Vibrio cholerae serotype O1 (strain ATCC 39315 / El Tor Inaba N16961).